An 807-amino-acid chain; its full sequence is Glycerol-3-phosphate acyltransferase (807 aa).

The HXXXXD motif motif lies at 308-313; that stretch reads CHRSHM.

The protein belongs to the GPAT/DAPAT family.

It is found in the cell inner membrane. The catalysed reaction is sn-glycerol 3-phosphate + an acyl-CoA = a 1-acyl-sn-glycero-3-phosphate + CoA. It functions in the pathway phospholipid metabolism; CDP-diacylglycerol biosynthesis; CDP-diacylglycerol from sn-glycerol 3-phosphate: step 1/3. This is Glycerol-3-phosphate acyltransferase from Shewanella baltica (strain OS195).